An 819-amino-acid chain; its full sequence is Hypoxia-inducible factor 1-alpha (819 aa).

Residues 1-31 (MEGAAGGEEKKNRMSSERRKEKSRDAARSRR) form a disordered region. An interaction with TSGA10 region spans residues 1–402 (MEGAAGGEEK…KEPDALTLLA (402 aa)). Positions 7 to 31 (GEEKKNRMSSERRKEKSRDAARSRR) are enriched in basic and acidic residues. Residues 18 to 71 (RRKEKSRDAARSRRSKESEVFYELAHQLPLPHNVSSHLDKASVMRLTISYLRVR) form the bHLH domain. The tract at residues 22-31 (KSRDAARSRR) is DNA-binding. A PAS 1 domain is found at 86–159 (KAQMNCFYLK…THRNGPIKKG (74 aa)). Residues 171–192 (RMKCTLTSRGRTMNIKSATWKV) are required for heterodimer formation with ARNT. Residues 229–299 (PHPSNIEIPL…KTHHDMFTKG (71 aa)) enclose the PAS 2 domain. Phosphoserine; by CK1 is present on serine 248. The region spanning 303 to 346 (TGQYRMLAKRGGYVWVETQATVIYNTKNSQPQCIVCVNYVVSGI) is the PAC domain. The interval 402 to 599 (APAAGDTIIS…NPPSVSTAFQ (198 aa)) is ODD. The residue at position 403 (proline 403) is a 4-hydroxyproline. Polar residues predominate over residues 495–518 (IQDQPASPSDGSTRQSSPEPNSPS). A disordered region spans residues 495 to 521 (IQDQPASPSDGSTRQSSPEPNSPSEYC). The interval 532-576 (FKLELVEKLFAEDTEAKNPFSTQDTDLDLEMLAPYIPMDDDFQLR) is NTAD. Position 533 is an N6-acetyllysine; alternate (lysine 533). Lysine 533 is covalently cross-linked (Glycyl lysine isopeptide (Lys-Gly) (interchain with G-Cter in ubiquitin); alternate). Residues lysine 539 and lysine 548 each participate in a glycyl lysine isopeptide (Lys-Gly) (interchain with G-Cter in ubiquitin) cross-link. Position 552 is a phosphoserine; by GSK3-beta (serine 552). Phosphothreonine; by GSK3-beta is present on threonine 556. A 4-hydroxyproline modification is found at proline 565. Serine 577 carries the phosphoserine; by PLK3 modification. An ID region spans residues 577-778 (SFDQLSPLES…SDLACRLLGQ (202 aa)). The interval 581 to 685 (LSPLESSSPN…SHPRSPNVLS (105 aa)) is disordered. Residues 582 to 613 (SPLESSSPNPPSVSTAFQQTQLQEPTITTTTT) are compositionally biased toward low complexity. A compositionally biased stretch (basic and acidic residues) spans 614–628 (EELKTVTKDSTEDIK). The segment covering 632 to 655 (TSPSSTHTPKETTTATTSSPYSGT) has biased composition (low complexity). At serine 650 the chain carries Phosphoserine; by PLK3. At lysine 702 the chain carries N6-acetyllysine. Positions 711 to 717 (RKRKMEH) match the Nuclear localization signal motif. The CTAD stretch occupies residues 779–819 (SMDGSGLPQLTSYDCEVNAPIQGSRNLLQGEELLRALDQVN). Position 793 is an S-nitrosocysteine (cysteine 793). Asparagine 796 is modified ((3S)-3-hydroxyasparagine).

Interacts with the ARNT; forms a heterodimer that binds core DNA sequence 5'-TACGTG-3' within the hypoxia response element (HRE) of target gene promoters. Interacts with COPS5; the interaction increases the transcriptional activity of HIF1A through increased stability. Interacts with EP300 (via TAZ-type 1 domains); the interaction is stimulated in response to hypoxia and inhibited by CITED2. Interacts with CREBBP (via TAZ-type 1 domains). Interacts with NCOA1, NCOA2, APEX1 and HSP90. Interacts (hydroxylated within the ODD domain) with VHLL (via beta domain); the interaction, leads to polyubiquitination and subsequent HIF1A proteasomal degradation. During hypoxia, sumoylated HIF1A also binds VHL; the interaction promotes the ubiquitination of HIF1A. Interacts with SENP1; the interaction desumoylates HIF1A resulting in stabilization and activation of transcription. Interacts (via the ODD domain) with NAA10; the interaction appears not to acetylate HIF1A nor have any affect on protein stability, during hypoxia. Interacts with RWDD3; the interaction enhances HIF1A sumoylation. Interacts with TSGA10. Interacts with HIF3A. Interacts with RORA (via the DNA binding domain); the interaction enhances HIF1A transcription under hypoxia through increasing protein stability. Interaction with PSMA7 inhibits the transactivation activity of HIF1A under both normoxic and hypoxia-mimicking conditions. Interacts with USP20. Interacts with RACK1; promotes HIF1A ubiquitination and proteasome-mediated degradation. Interacts (via N-terminus) with USP19. Interacts with SIRT2. Interacts (deacetylated form) with EGLN1. Interacts with CBFA2T3. Interacts with HSP90AA1 and HSP90AB1. Interacts with DCUN1D1; this interaction increases the interaction between VHL and DCUN1D1. Interacts with HIF1AN. Post-translationally, S-nitrosylation of Cys-793 may be responsible for increased recruitment of p300 coactivator necessary for transcriptional activity of HIF-1 complex. Acetylation of Lys-533 by ARD1 increases interaction with VHL and stimulates subsequent proteasomal degradation. Deacetylation of Lys-702 by SIRT2 increases its interaction with and hydroxylation by EGLN1 thereby inactivating HIF1A activity by inducing its proteasomal degradation. In terms of processing, requires phosphorylation for DNA-binding. Phosphorylation at Ser-248 by CSNK1D/CK1 represses kinase activity and impairs ARNT binding. Phosphorylation by GSK3-beta and PLK3 promote degradation by the proteasome. Post-translationally, the iron and 2-oxoglutarate dependent 3-hydroxylation of asparagine is (S) stereospecific within HIF CTAD domains. Sumoylated; with SUMO1 under hypoxia. Sumoylation is enhanced through interaction with RWDD3. Both sumoylation and desumoylation seem to be involved in the regulation of its stability during hypoxia. Sumoylation can promote either its stabilization or its VHL-dependent degradation by promoting hydroxyproline-independent HIF1A-VHL complex binding, thus leading to HIF1A ubiquitination and proteasomal degradation. Desumoylation by SENP1 increases its stability amd transcriptional activity. There is a disaccord between various publications on the effect of sumoylation and desumoylation on its stability and transcriptional activity. In terms of processing, in normoxia, is hydroxylated on Pro-403 and Pro-565 in the oxygen-dependent degradation domain (ODD) by EGLN1/PHD2 and EGLN2/PHD1. EGLN3/PHD3 has also been shown to hydroxylate Pro-565. The hydroxylated prolines promote interaction with VHL, initiating rapid ubiquitination and subsequent proteasomal degradation. Deubiquitinated by USP20. Under hypoxia, proline hydroxylation is impaired and ubiquitination is attenuated, resulting in stabilization. In normoxia, is hydroxylated on Asn-796 by HIF1AN, thus abrogating interaction with CREBBP and EP300 and preventing transcriptional activation. Repressed by iron ion, via Fe(2+) prolyl hydroxylase (PHD) enzymes-mediated hydroxylation and subsequent proteasomal degradation.

It localises to the cytoplasm. The protein localises to the nucleus. The protein resides in the nucleus speckle. Induced by reactive oxygen species (ROS). Its function is as follows. Functions as a master transcriptional regulator of the adaptive response to hypoxia. Under hypoxic conditions, activates the transcription of over 40 genes, including erythropoietin, glucose transporters, glycolytic enzymes, vascular endothelial growth factor, HILPDA, and other genes whose protein products increase oxygen delivery or facilitate metabolic adaptation to hypoxia. Plays an essential role in embryonic vascularization, tumor angiogenesis and pathophysiology of ischemic disease. Heterodimerizes with ARNT; heterodimer binds to core DNA sequence 5'-TACGTG-3' within the hypoxia response element (HRE) of target gene promoters. Activation requires recruitment of transcriptional coactivators such as CREBBP and EP300. Activity is enhanced by interaction with NCOA1 and/or NCOA2. Interaction with redox regulatory protein APEX1 seems to activate CTAD and potentiates activation by NCOA1 and CREBBP. Involved in the axonal distribution and transport of mitochondria in neurons during hypoxia. In Eospalax fontanierii baileyi (Plateau zokor), this protein is Hypoxia-inducible factor 1-alpha (HIF1A).